Reading from the N-terminus, the 126-residue chain is MRHRKSGRQLNRNSSHRKAMFSNMASSLVRHEIIKTTLPKAKELRRVVEPLITLAKTDSVANRRLAFARTRDNEVVAKLFTELGPRFAQRAGGYTRILKCGFRAGDKAPMAYIELVDRPEVEADAE.

Belongs to the bacterial ribosomal protein bL17 family. Part of the 50S ribosomal subunit. Contacts protein L32.

The sequence is that of Large ribosomal subunit protein bL17 from Aliivibrio fischeri (strain ATCC 700601 / ES114) (Vibrio fischeri).